Reading from the N-terminus, the 361-residue chain is 5-formaminoimidazole-4-carboxamide-1-(beta)-D-ribofuranosyl 5'-monophosphate synthetase (361 aa).

2 residues coordinate 5-amino-1-(5-phospho-beta-D-ribosyl)imidazole-4-carboxamide: His27 and Ser94. In terms of domain architecture, ATP-grasp spans 116 to 348 (RQILRWEAER…MGQRIAKEIK (233 aa)). ATP is bound by residues 146–208 (PDEI…TNYC) and Glu230. Asn258 provides a ligand contact to 5-amino-1-(5-phospho-beta-D-ribosyl)imidazole-4-carboxamide. The Mg(2+) site is built by Gln297 and Glu310.

The protein belongs to the phosphohexose mutase family. Mg(2+) serves as cofactor. It depends on Mn(2+) as a cofactor.

The catalysed reaction is 5-amino-1-(5-phospho-beta-D-ribosyl)imidazole-4-carboxamide + formate + ATP = 5-formamido-1-(5-phospho-D-ribosyl)imidazole-4-carboxamide + ADP + phosphate. It functions in the pathway purine metabolism; IMP biosynthesis via de novo pathway; 5-formamido-1-(5-phospho-D-ribosyl)imidazole-4-carboxamide from 5-amino-1-(5-phospho-D-ribosyl)imidazole-4-carboxamide (formate route): step 1/1. Functionally, catalyzes the ATP- and formate-dependent formylation of 5-aminoimidazole-4-carboxamide-1-beta-d-ribofuranosyl 5'-monophosphate (AICAR) to 5-formaminoimidazole-4-carboxamide-1-beta-d-ribofuranosyl 5'-monophosphate (FAICAR) in the absence of folates. This Methanococcus aeolicus (strain ATCC BAA-1280 / DSM 17508 / OCM 812 / Nankai-3) protein is 5-formaminoimidazole-4-carboxamide-1-(beta)-D-ribofuranosyl 5'-monophosphate synthetase.